The following is a 204-amino-acid chain: Serotype 3 fimbrial subunit (204 aa).

An N-terminal signal peptide occupies residues 1-25 (MSKFSYPALRAALILAASPVLPALA). The cysteines at positions 41 and 84 are disulfide-linked.

This sequence belongs to the fimbrial protein family.

It localises to the fimbrium. Its function is as follows. Bordetella pertussis is the causative agent of whooping cough. An essential step in the disease process is the attachment of the bacteria to the ciliated epithelium of the respiratory tract, enabling the organism to resist normal host-clearance mechanisms. It is unclear which bacterial cell surface component are responsible for adherence but the fimbriae of B.pertussis are prime candidates for being involved in this process. The chain is Serotype 3 fimbrial subunit (fim3) from Bordetella pertussis (strain Tohama I / ATCC BAA-589 / NCTC 13251).